Here is a 215-residue protein sequence, read N- to C-terminus: Transmembrane protein 267 (215 aa).

The next 3 membrane-spanning stretches (helical) occupy residues 77 to 97, 114 to 134, and 178 to 198; these read FCEV…HFFL, PLHC…LMQL, and YWLY…IMCL.

It is found in the membrane. The chain is Transmembrane protein 267 (tmem267) from Xenopus laevis (African clawed frog).